A 357-amino-acid polypeptide reads, in one-letter code: Prostaglandin D2 receptor-like (357 aa).

Over 1–20 (MNESYRCQAATWVERGSSAT) the chain is Extracellular. Asn2 is a glycosylation site (N-linked (GlcNAc...) asparagine). A helical membrane pass occupies residues 21-41 (MGGVLFSAGLLGNLLALVLLA). Residues 42–57 (RSGLGSCRPGPLHPPP) lie on the Cytoplasmic side of the membrane. The helical transmembrane segment at 58 to 78 (SVFYVLVCGLTVTHLLGKCLI) threads the bilayer. Topologically, residues 79 to 106 (SPMVLAAYAQNRSLKELLPASGNQLCEA) are extracellular. N-linked (GlcNAc...) asparagine glycosylation occurs at Asn89. Cys104 and Cys182 are oxidised to a cystine. Residues 107–127 (FAFLMSFFGLASTLQLLAMAL) traverse the membrane as a helical segment. At 128-149 (ECWLSLGHPFFYQRHITARRGV) the chain is on the cytoplasmic side. Residues 150–170 (LVAPVAGAFSLAFCALPFAGF) traverse the membrane as a helical segment. Residues 171–194 (GKFVQYCPGTWCFIQMIHKKRSFS) are Extracellular-facing. A helical membrane pass occupies residues 195-215 (VIGFSVLYSSLMALLVLATVV). Topologically, residues 216–261 (CNLGAMSNLYAMHRRQRHHPRRCSRDRAQSGSDYRHGSPNPLEELD) are cytoplasmic. The chain crosses the membrane as a helical span at residues 262-282 (HFVLLALTTVLFTMCSLPLIY). Residues 283-306 (RAYYGAFKLVDRADGDSEDLQALR) are Extracellular-facing. A helical transmembrane segment spans residues 307–327 (FLSVISIVDPWIFIIFRTSVF). Topologically, residues 328–357 (RMLFHKAFTRPLIYRNWCSHSWQTNMESTL) are cytoplasmic.

The protein belongs to the G-protein coupled receptor 1 family. Strongly expressed in eye and gastrointestinal tract (GIT), moderately in the brain and oviduct and weakly in the epididymis. In the eye, expressed in the epithelium of the iris and ciliary body and in photoreceptor cells of the retina. In the brain, expressed in leptomeninges, choroid plexus and spinal cord (sensory and motor neurons of the dorsal and ventral horns). In the stomach, expressed in the mucous-secreting goblet cells and the columnar epithelium. Expressed in platelets.

It localises to the cell membrane. In terms of biological role, receptor for prostaglandin D2 (PGD2). The activity of this receptor is mainly mediated by G(s) proteins that stimulate adenylate cyclase, resulting in an elevation of intracellular cAMP. A mobilization of calcium is also observed, but without formation of inositol 1,4,5-trisphosphate. In Rattus norvegicus (Rat), this protein is Prostaglandin D2 receptor-like (Ptgdrl).